The sequence spans 360 residues: MLVWLAEYLVRYETAFNAISYITVRAILALLTALFISLWIGPKVIKRLQILKFGQEVRNDGPESHFAKKGTPTMGGVMILFSIGVSTLLWANLANSYIWVCLFVLFGYGAIGFVDDFRKITRKNTDGLIARWKYFWMSVVALVAILWLYWLGHDTDATRLVIPFFKDIMPQLGLFYIVLSYFVIVGTGNAVNLTDGLDGLAIMPTALVAGAFALIAWATGNVNFAEYLHIPYIKYSSEVVVFCTAIVGASLGFLWFNTYPAQVFMGDVGSLALGGALGVVAILVRQEFLLVIMGGVFVVEALSVILQVGSYKLRKQRIFRMAPIHHHFELKGWPEPRVIIRFWIISLMLVLMGLVTLKLR.

10 consecutive transmembrane segments (helical) span residues 21-41 (YITV…LWIG), 73-93 (TMGG…WANL), 94-114 (ANSY…IGFV), 132-152 (WKYF…YWLG), 168-188 (IMPQ…VGTG), 199-219 (GLAI…AWAT), 239-259 (VVVF…FNTY), 263-283 (VFMG…VAIL), 288-308 (FLLV…ILQV), and 338-358 (VIIR…VTLK).

It belongs to the glycosyltransferase 4 family. MraY subfamily. Mg(2+) serves as cofactor.

The protein resides in the cell inner membrane. The enzyme catalyses UDP-N-acetyl-alpha-D-muramoyl-L-alanyl-gamma-D-glutamyl-meso-2,6-diaminopimeloyl-D-alanyl-D-alanine + di-trans,octa-cis-undecaprenyl phosphate = di-trans,octa-cis-undecaprenyl diphospho-N-acetyl-alpha-D-muramoyl-L-alanyl-D-glutamyl-meso-2,6-diaminopimeloyl-D-alanyl-D-alanine + UMP. It functions in the pathway cell wall biogenesis; peptidoglycan biosynthesis. Catalyzes the initial step of the lipid cycle reactions in the biosynthesis of the cell wall peptidoglycan: transfers peptidoglycan precursor phospho-MurNAc-pentapeptide from UDP-MurNAc-pentapeptide onto the lipid carrier undecaprenyl phosphate, yielding undecaprenyl-pyrophosphoryl-MurNAc-pentapeptide, known as lipid I. The sequence is that of Phospho-N-acetylmuramoyl-pentapeptide-transferase from Haemophilus influenzae (strain 86-028NP).